Consider the following 443-residue polypeptide: Ribosomal protein uS12 methylthiotransferase RimO (443 aa).

The MTTase N-terminal domain maps to 1–116 (MKFHLISLGC…IAEYVGKLIA (116 aa)). 6 residues coordinate [4Fe-4S] cluster: Cys-10, Cys-45, Cys-79, Cys-154, Cys-158, and Cys-161. The Radical SAM core domain occupies 140–370 (STPFFRAWVK…LELQQELSTE (231 aa)). In terms of domain architecture, TRAM spans 373–441 (KKYVGTVQKV…QYDLVGGVVS (69 aa)).

This sequence belongs to the methylthiotransferase family. RimO subfamily. [4Fe-4S] cluster is required as a cofactor.

Its subcellular location is the cytoplasm. The catalysed reaction is L-aspartate(89)-[ribosomal protein uS12]-hydrogen + (sulfur carrier)-SH + AH2 + 2 S-adenosyl-L-methionine = 3-methylsulfanyl-L-aspartate(89)-[ribosomal protein uS12]-hydrogen + (sulfur carrier)-H + 5'-deoxyadenosine + L-methionine + A + S-adenosyl-L-homocysteine + 2 H(+). Its function is as follows. Catalyzes the methylthiolation of an aspartic acid residue of ribosomal protein uS12. This Desulfotalea psychrophila (strain LSv54 / DSM 12343) protein is Ribosomal protein uS12 methylthiotransferase RimO.